Consider the following 254-residue polypeptide: 3-deoxy-manno-octulosonate cytidylyltransferase (254 aa).

It belongs to the KdsB family.

It is found in the cytoplasm. It catalyses the reaction 3-deoxy-alpha-D-manno-oct-2-ulosonate + CTP = CMP-3-deoxy-beta-D-manno-octulosonate + diphosphate. The protein operates within nucleotide-sugar biosynthesis; CMP-3-deoxy-D-manno-octulosonate biosynthesis; CMP-3-deoxy-D-manno-octulosonate from 3-deoxy-D-manno-octulosonate and CTP: step 1/1. It functions in the pathway bacterial outer membrane biogenesis; lipopolysaccharide biosynthesis. Activates KDO (a required 8-carbon sugar) for incorporation into bacterial lipopolysaccharide in Gram-negative bacteria. This is 3-deoxy-manno-octulosonate cytidylyltransferase from Polynucleobacter necessarius subsp. necessarius (strain STIR1).